We begin with the raw amino-acid sequence, 326 residues long: DnaJ homolog subfamily B member 6 (326 aa).

In terms of domain architecture, J spans 2 to 69 (VDYYEVLGVQ…KKRDIYDKYG (68 aa)). The tract at residues 2–146 (VDYYEVLGVQ…TGSFFSAFSG (145 aa)) is interaction with HSP70. Residues 119–242 (FEDFFGNRRG…ADDDALAEER (124 aa)) are interaction with KRT18. Residue Arg135 is modified to Omega-N-methylarginine. A disordered region spans residues 249 to 326 (ALPAQPAGLR…KKKKSTKGNH (78 aa)). Ser277 bears the Phosphoserine mark.

In terms of assembly, homooligomer. Interacts with BAG3, HSPB8 and STUB1. Interacts with ALKBH1. Interacts with HSP70, KRT18 and PTTG. Interacts with histone deacetylases HDAC4, HDAC6, and SIRT2, HDAC activity is required for antiaggregation. Widely expressed. Highest levels in testis and brain, and lower levels in heart, spleen, intestine, ovary, placenta, lung, kidney, pancreas, thymus, prostate, skeletal muscle, liver and leukocytes. In testis, expressed in germ cells in the earlier stages of differentiation pathway as well as in spermatids. In brain, expressed at a higher level in hippocampus and thalamus and a lower level in amygdala, substantia nigra, corpus callosum and caudate nucleus.

It is found in the cytoplasm. The protein resides in the perinuclear region. The protein localises to the nucleus. It localises to the myofibril. Its subcellular location is the sarcomere. It is found in the z line. Its function is as follows. Has a stimulatory effect on the ATPase activity of HSP70 in a dose-dependent and time-dependent manner and hence acts as a co-chaperone of HSP70. Plays an indispensable role in the organization of KRT8/KRT18 filaments. Acts as an endogenous molecular chaperone for neuronal proteins including huntingtin. Suppresses aggregation and toxicity of polyglutamine-containing, aggregation-prone proteins. Also reduces cellular toxicity and caspase-3 activity. In terms of biological role, isoform B but not isoform A inhibits huntingtin aggregation. The protein is DnaJ homolog subfamily B member 6 (DNAJB6) of Homo sapiens (Human).